A 222-amino-acid chain; its full sequence is 7-cyano-7-deazaguanine synthase (222 aa).

Residue 8-18 (LSGGLDSATCL) coordinates ATP. Positions 187, 197, 200, and 203 each coordinate Zn(2+).

Belongs to the QueC family. Zn(2+) serves as cofactor.

It catalyses the reaction 7-carboxy-7-deazaguanine + NH4(+) + ATP = 7-cyano-7-deazaguanine + ADP + phosphate + H2O + H(+). It functions in the pathway purine metabolism; 7-cyano-7-deazaguanine biosynthesis. In terms of biological role, catalyzes the ATP-dependent conversion of 7-carboxy-7-deazaguanine (CDG) to 7-cyano-7-deazaguanine (preQ(0)). The chain is 7-cyano-7-deazaguanine synthase from Alcanivorax borkumensis (strain ATCC 700651 / DSM 11573 / NCIMB 13689 / SK2).